Reading from the N-terminus, the 227-residue chain is Cytochrome c oxidase subunit 2 (227 aa).

Residues 1-14 (MAYPFQLGLXDATS) lie on the Mitochondrial intermembrane side of the membrane. A helical membrane pass occupies residues 15–45 (PIMEELLHFHDHTLMIVFLISSLVLYIITLM). Topologically, residues 46–59 (LTTKLTHTSTMDAQ) are mitochondrial matrix. A helical transmembrane segment spans residues 60–87 (EVETVWTILPAIILILIALPSLRILYMM). Residues 88–227 (DEINNPSLTV…YFETWSAVMV (140 aa)) lie on the Mitochondrial intermembrane side of the membrane. Cu cation is bound by residues histidine 161, cysteine 196, glutamate 198, cysteine 200, histidine 204, and methionine 207. Glutamate 198 contributes to the Mg(2+) binding site.

It belongs to the cytochrome c oxidase subunit 2 family. Component of the cytochrome c oxidase (complex IV, CIV), a multisubunit enzyme composed of 14 subunits. The complex is composed of a catalytic core of 3 subunits MT-CO1, MT-CO2 and MT-CO3, encoded in the mitochondrial DNA, and 11 supernumerary subunits COX4I, COX5A, COX5B, COX6A, COX6B, COX6C, COX7A, COX7B, COX7C, COX8 and NDUFA4, which are encoded in the nuclear genome. The complex exists as a monomer or a dimer and forms supercomplexes (SCs) in the inner mitochondrial membrane with NADH-ubiquinone oxidoreductase (complex I, CI) and ubiquinol-cytochrome c oxidoreductase (cytochrome b-c1 complex, complex III, CIII), resulting in different assemblies (supercomplex SCI(1)III(2)IV(1) and megacomplex MCI(2)III(2)IV(2)). Found in a complex with TMEM177, COA6, COX18, COX20, SCO1 and SCO2. Interacts with TMEM177 in a COX20-dependent manner. Interacts with COX20. Interacts with COX16. It depends on Cu cation as a cofactor.

The protein localises to the mitochondrion inner membrane. It carries out the reaction 4 Fe(II)-[cytochrome c] + O2 + 8 H(+)(in) = 4 Fe(III)-[cytochrome c] + 2 H2O + 4 H(+)(out). Functionally, component of the cytochrome c oxidase, the last enzyme in the mitochondrial electron transport chain which drives oxidative phosphorylation. The respiratory chain contains 3 multisubunit complexes succinate dehydrogenase (complex II, CII), ubiquinol-cytochrome c oxidoreductase (cytochrome b-c1 complex, complex III, CIII) and cytochrome c oxidase (complex IV, CIV), that cooperate to transfer electrons derived from NADH and succinate to molecular oxygen, creating an electrochemical gradient over the inner membrane that drives transmembrane transport and the ATP synthase. Cytochrome c oxidase is the component of the respiratory chain that catalyzes the reduction of oxygen to water. Electrons originating from reduced cytochrome c in the intermembrane space (IMS) are transferred via the dinuclear copper A center (CU(A)) of subunit 2 and heme A of subunit 1 to the active site in subunit 1, a binuclear center (BNC) formed by heme A3 and copper B (CU(B)). The BNC reduces molecular oxygen to 2 water molecules using 4 electrons from cytochrome c in the IMS and 4 protons from the mitochondrial matrix. The protein is Cytochrome c oxidase subunit 2 (MT-CO2) of Vulpes corsac (Corsac fox).